Consider the following 277-residue polypeptide: Inositol monophosphatase 1 (277 aa).

Positions 70, 90, 92, and 93 each coordinate Mg(2+). Glu70 contributes to the substrate binding site. Substrate is bound by residues 92–95 (IDGT), 194–196 (GTA), Glu213, and Asp220. Residue Asp220 participates in Mg(2+) binding.

Belongs to the inositol monophosphatase superfamily. As to quaternary structure, homodimer. The cofactor is Mg(2+). Ubiquitous.

Its subcellular location is the cytoplasm. The catalysed reaction is a myo-inositol phosphate + H2O = myo-inositol + phosphate. The enzyme catalyses 1D-myo-inositol 1-phosphate + H2O = myo-inositol + phosphate. It carries out the reaction 1D-myo-inositol 2-phosphate + H2O = myo-inositol + phosphate. It catalyses the reaction 1D-myo-inositol 3-phosphate + H2O = myo-inositol + phosphate. The catalysed reaction is 1D-myo-inositol 4-phosphate + H2O = myo-inositol + phosphate. The enzyme catalyses 1D-myo-inositol 5-phosphate + H2O = myo-inositol + phosphate. It carries out the reaction 1D-myo-inositol 6-phosphate + H2O = myo-inositol + phosphate. It catalyses the reaction scyllo-inositol 1-phosphate + H2O = scyllo-inositol + phosphate. The catalysed reaction is alpha-D-galactose 1-phosphate + H2O = D-galactose + phosphate. The enzyme catalyses alpha-D-glucose 1-phosphate + H2O = D-glucose + phosphate. It carries out the reaction D-glucose 6-phosphate + H2O = D-glucose + phosphate. It catalyses the reaction beta-D-fructose 1-phosphate + H2O = D-fructose + phosphate. The catalysed reaction is glycerol 2-phosphate + H2O = glycerol + phosphate. The enzyme catalyses adenosine 2'-phosphate + H2O = adenosine + phosphate. It participates in polyol metabolism; myo-inositol biosynthesis; myo-inositol from D-glucose 6-phosphate: step 2/2. With respect to regulation, activity with myo-inositol monophosphate and D-galactose 1-phosphate is inhibited by Li(+), Ca(2+) and Mn(2+), but also by Mg(2+) at concentrations above 3 mM. Its function is as follows. Phosphatase involved in the dephosphorylation of myo-inositol monophosphate to generate myo-inositol. Is also able to dephosphorylate scyllo-inositol-phosphate, myo-inositol 1,4-diphosphate, scyllo-inositol-1,3-diphosphate and scyllo-inositol-1,4-diphosphate. Also dephosphorylates in vitro other sugar-phosphates including D-galactose-1-phosphate, glucose-1-phosphate, glucose-6-phosphate, fructose-1-phosphate, beta-glycerophosphate and 2'-AMP. Responsible for the provision of inositol required for synthesis of phosphatidylinositol and polyphosphoinositides, and involved in maintaining normal brain function. Has been implicated as the pharmacological target for lithium Li(+) action in brain. Is equally active with myo-inositol monophosphate and D-galactose 1-phosphate. The polypeptide is Inositol monophosphatase 1 (Impa1) (Rattus norvegicus (Rat)).